Consider the following 83-residue polypeptide: Cytochrome b559 subunit alpha (83 aa).

The chain crosses the membrane as a helical span at residues 21-35 (VIHSITIPSLFIAGW). H23 serves as a coordination point for heme.

It belongs to the PsbE/PsbF family. As to quaternary structure, heterodimer of an alpha subunit and a beta subunit. PSII is composed of 1 copy each of membrane proteins PsbA, PsbB, PsbC, PsbD, PsbE, PsbF, PsbH, PsbI, PsbJ, PsbK, PsbL, PsbM, PsbT, PsbX, PsbY, PsbZ, Psb30/Ycf12, at least 3 peripheral proteins of the oxygen-evolving complex and a large number of cofactors. It forms dimeric complexes. Heme b is required as a cofactor.

It localises to the plastid. It is found in the chloroplast thylakoid membrane. In terms of biological role, this b-type cytochrome is tightly associated with the reaction center of photosystem II (PSII). PSII is a light-driven water:plastoquinone oxidoreductase that uses light energy to abstract electrons from H(2)O, generating O(2) and a proton gradient subsequently used for ATP formation. It consists of a core antenna complex that captures photons, and an electron transfer chain that converts photonic excitation into a charge separation. The polypeptide is Cytochrome b559 subunit alpha (Staurastrum punctulatum (Green alga)).